A 474-amino-acid chain; its full sequence is Dihydrolipoyl dehydrogenase (474 aa).

Residues 36–45 (ERYNTLGGVC), K54, and G117 contribute to the FAD site. The cysteines at positions 45 and 50 are disulfide-linked. NAD(+) is bound by residues 182 to 186 (GGGII) and E205. An N6-acetyllysine modification is found at K220. NAD(+) contacts are provided by residues V238 and 270 to 273 (AIGR). D313 and A321 together coordinate FAD. H445 functions as the Proton acceptor in the catalytic mechanism.

This sequence belongs to the class-I pyridine nucleotide-disulfide oxidoreductase family. As to quaternary structure, homodimer. Requires FAD as cofactor.

The protein localises to the cytoplasm. It catalyses the reaction N(6)-[(R)-dihydrolipoyl]-L-lysyl-[protein] + NAD(+) = N(6)-[(R)-lipoyl]-L-lysyl-[protein] + NADH + H(+). Functionally, lipoamide dehydrogenase is a component of the glycine cleavage system as well as of the alpha-ketoacid dehydrogenase complexes. In Shigella flexneri, this protein is Dihydrolipoyl dehydrogenase (lpdA).